The sequence spans 180 residues: Oligoribonuclease (180 aa).

One can recognise an Exonuclease domain in the interval 7-170; sequence LIWIDLEMTG…DDIRESIAEL (164 aa). Tyr-128 is an active-site residue.

It belongs to the oligoribonuclease family.

It localises to the cytoplasm. In terms of biological role, 3'-to-5' exoribonuclease specific for small oligoribonucleotides. In Pseudomonas entomophila (strain L48), this protein is Oligoribonuclease.